Consider the following 137-residue polypeptide: Methylglyoxal synthase (137 aa).

Positions 1–137 (MNIALVAHDK…KLSHNDEPPA (137 aa)) constitute an MGS-like domain. Substrate contacts are provided by residues H8, K12, 34-37 (TGTT), and 54-55 (SG). D60 acts as the Proton donor/acceptor in catalysis. Residue H87 coordinates substrate.

Belongs to the methylglyoxal synthase family.

It carries out the reaction dihydroxyacetone phosphate = methylglyoxal + phosphate. Functionally, catalyzes the formation of methylglyoxal from dihydroxyacetone phosphate. This Exiguobacterium sp. (strain ATCC BAA-1283 / AT1b) protein is Methylglyoxal synthase.